The following is an 88-amino-acid chain: Meiosis expressed gene 1 protein homolog (88 aa).

This sequence belongs to the MEIG1 family. Interacts with PACRG. Interacts with MORN3.

Its function is as follows. Essential for spermiogenesis. The sequence is that of Meiosis expressed gene 1 protein homolog from Homo sapiens (Human).